The primary structure comprises 480 residues: ATP synthase subunit beta (480 aa).

Residue Gly-153 to Thr-160 coordinates ATP.

This sequence belongs to the ATPase alpha/beta chains family. F-type ATPases have 2 components, CF(1) - the catalytic core - and CF(0) - the membrane proton channel. CF(1) has five subunits: alpha(3), beta(3), gamma(1), delta(1), epsilon(1). CF(0) has three main subunits: a(1), b(2) and c(9-12). The alpha and beta chains form an alternating ring which encloses part of the gamma chain. CF(1) is attached to CF(0) by a central stalk formed by the gamma and epsilon chains, while a peripheral stalk is formed by the delta and b chains.

The protein resides in the cell membrane. It catalyses the reaction ATP + H2O + 4 H(+)(in) = ADP + phosphate + 5 H(+)(out). Functionally, produces ATP from ADP in the presence of a proton gradient across the membrane. The catalytic sites are hosted primarily by the beta subunits. The chain is ATP synthase subunit beta from Lactobacillus gasseri (strain ATCC 33323 / DSM 20243 / BCRC 14619 / CIP 102991 / JCM 1131 / KCTC 3163 / NCIMB 11718 / NCTC 13722 / AM63).